Reading from the N-terminus, the 228-residue chain is LOB domain-containing protein 30 (228 aa).

One can recognise an LOB domain in the interval 16–118 (GPCGACKFLR…TELSYLQAHL (103 aa)). The segment at 188–228 (SNMGGGGELQALAREFIHGGQMPAQPSPGTSGSASSVIKRE) is disordered. The span at 214–228 (SPGTSGSASSVIKRE) shows a compositional bias: polar residues.

The protein belongs to the LOB domain-containing protein family. Expressed in roots, stems, leaves and flowers. Expressed in vascular tissues of hypocotyls, leaves, roots, developing floral organs and siliques.

Involved in the positive regulation of tracheary element (TE) differentiation. Involved in a positive feedback loop that maintains or promotes NAC030/VND7 expression that regulates TE differentiation-related genes. The polypeptide is LOB domain-containing protein 30 (LBD30) (Arabidopsis thaliana (Mouse-ear cress)).